The primary structure comprises 717 residues: Fatty acid oxidation complex subunit alpha (717 aa).

Residues 1–190 (MIHAGNAITV…KDGAVDAVVA (190 aa)) are enoyl-CoA hydratase/isomerase. Asp-298 serves as a coordination point for substrate. The 3-hydroxyacyl-CoA dehydrogenase stretch occupies residues 313–717 (HPVNQAAVLG…MAANNKKFYG (405 aa)). Residues Met-326, Asp-345, 402–404 (VTE), Lys-409, and Ser-431 contribute to the NAD(+) site. His-452 (for 3-hydroxyacyl-CoA dehydrogenase activity) is an active-site residue. Asn-455 serves as a coordination point for NAD(+). Residue Asn-502 participates in substrate binding.

This sequence in the N-terminal section; belongs to the enoyl-CoA hydratase/isomerase family. In the C-terminal section; belongs to the 3-hydroxyacyl-CoA dehydrogenase family. In terms of assembly, heterotetramer of two alpha chains (FadB) and two beta chains (FadA).

The enzyme catalyses a (3S)-3-hydroxyacyl-CoA + NAD(+) = a 3-oxoacyl-CoA + NADH + H(+). It carries out the reaction a (3S)-3-hydroxyacyl-CoA = a (2E)-enoyl-CoA + H2O. The catalysed reaction is a 4-saturated-(3S)-3-hydroxyacyl-CoA = a (3E)-enoyl-CoA + H2O. It catalyses the reaction (3S)-3-hydroxybutanoyl-CoA = (3R)-3-hydroxybutanoyl-CoA. The enzyme catalyses a (3Z)-enoyl-CoA = a 4-saturated (2E)-enoyl-CoA. It carries out the reaction a (3E)-enoyl-CoA = a 4-saturated (2E)-enoyl-CoA. Its pathway is lipid metabolism; fatty acid beta-oxidation. Functionally, involved in the aerobic and anaerobic degradation of long-chain fatty acids via beta-oxidation cycle. Catalyzes the formation of 3-oxoacyl-CoA from enoyl-CoA via L-3-hydroxyacyl-CoA. It can also use D-3-hydroxyacyl-CoA and cis-3-enoyl-CoA as substrate. This is Fatty acid oxidation complex subunit alpha from Acinetobacter baumannii (strain SDF).